We begin with the raw amino-acid sequence, 452 residues long: 3-phosphoshikimate 1-carboxyvinyltransferase (452 aa).

Positions 1 to 23 (MLNGSASKPATARKSAGLTGSVR) are disordered. Residues K28, S29, and R33 each contribute to the 3-phosphoshikimate site. Phosphoenolpyruvate is bound at residue K28. Phosphoenolpyruvate contacts are provided by G100 and R128. Residues S173, Q175, D326, and K353 each contribute to the 3-phosphoshikimate site. Q175 serves as a coordination point for phosphoenolpyruvate. D326 functions as the Proton acceptor in the catalytic mechanism. The phosphoenolpyruvate site is built by R357 and R405.

It belongs to the EPSP synthase family. In terms of assembly, monomer.

Its subcellular location is the cytoplasm. It catalyses the reaction 3-phosphoshikimate + phosphoenolpyruvate = 5-O-(1-carboxyvinyl)-3-phosphoshikimate + phosphate. It functions in the pathway metabolic intermediate biosynthesis; chorismate biosynthesis; chorismate from D-erythrose 4-phosphate and phosphoenolpyruvate: step 6/7. Functionally, catalyzes the transfer of the enolpyruvyl moiety of phosphoenolpyruvate (PEP) to the 5-hydroxyl of shikimate-3-phosphate (S3P) to produce enolpyruvyl shikimate-3-phosphate and inorganic phosphate. The polypeptide is 3-phosphoshikimate 1-carboxyvinyltransferase (Rhizobium johnstonii (strain DSM 114642 / LMG 32736 / 3841) (Rhizobium leguminosarum bv. viciae)).